The chain runs to 1342 residues: DNA-directed RNA polymerase subunit beta (1342 aa).

Residues K1022 and K1200 each carry the N6-acetyllysine modification.

This sequence belongs to the RNA polymerase beta chain family. As to quaternary structure, the RNAP catalytic core consists of 2 alpha, 1 beta, 1 beta' and 1 omega subunit. When a sigma factor is associated with the core the holoenzyme is formed, which can initiate transcription.

The catalysed reaction is RNA(n) + a ribonucleoside 5'-triphosphate = RNA(n+1) + diphosphate. In terms of biological role, DNA-dependent RNA polymerase catalyzes the transcription of DNA into RNA using the four ribonucleoside triphosphates as substrates. The sequence is that of DNA-directed RNA polymerase subunit beta from Escherichia coli O6:K15:H31 (strain 536 / UPEC).